The sequence spans 195 residues: MNPVYSPASSGVPYANPKGIGYPAGFPVGYAAAAPAYSPSMYPGANPAFPSGYAPGTPFKMSCSPTTGAVPPYSSSPNPYPAAVYPVRSPYPQQNPYAQQQGTYYTQPLYAAPPHVIHHTTVVQPNGMPAAMYAPPIPPPRPNGVTMGMVGGTTMAMSAGTLLTTHSPTPVAPHPSMPTYRQPATPTYSYVPPQW.

At 1–18 (MNPVYSPASSGVPYANPK) the chain is on the cytoplasmic side. Residues 19-43 (GIGYPAGFPVGYAAAAPAYSPSMYP) form a helical membrane-spanning segment. The Extracellular portion of the chain corresponds to 44–143 (GANPAFPSGY…APPIPPPRPN (100 aa)). Residues 144-163 (GVTMGMVGGTTMAMSAGTLL) traverse the membrane as a helical segment. Residues 164 to 195 (TTHSPTPVAPHPSMPTYRQPATPTYSYVPPQW) are Cytoplasmic-facing.

It belongs to the FAM168 family.

The protein localises to the cytoplasm. It localises to the perinuclear region. Its subcellular location is the cell membrane. It is found in the cell projection. The protein resides in the axon. Functionally, inhibitor of neuronal axonal outgrowth. This Danio rerio (Zebrafish) protein is Myelin-associated neurite-outgrowth inhibitor (fam168b).